A 67-amino-acid chain; its full sequence is Protein AaeX (67 aa).

2 helical membrane passes run 10-30 and 43-63; these read FGLS…LFFV and FVWH…YLLF.

Belongs to the AaeX family.

It localises to the cell membrane. This Pectobacterium carotovorum subsp. carotovorum (strain PC1) protein is Protein AaeX.